The primary structure comprises 339 residues: Anthranilate phosphoribosyltransferase (339 aa).

5-phospho-alpha-D-ribose 1-diphosphate is bound by residues glycine 81, glycine 84–aspartate 85, serine 89, asparagine 91–serine 94, lysine 109–serine 117, and alanine 121. Anthranilate is bound at residue glycine 81. Serine 93 is a Mg(2+) binding site. Asparagine 112 contributes to the anthranilate binding site. An anthranilate-binding site is contributed by arginine 167. Positions 225 and 226 each coordinate Mg(2+).

Belongs to the anthranilate phosphoribosyltransferase family. As to quaternary structure, homodimer. The cofactor is Mg(2+).

The enzyme catalyses N-(5-phospho-beta-D-ribosyl)anthranilate + diphosphate = 5-phospho-alpha-D-ribose 1-diphosphate + anthranilate. It participates in amino-acid biosynthesis; L-tryptophan biosynthesis; L-tryptophan from chorismate: step 2/5. Its function is as follows. Catalyzes the transfer of the phosphoribosyl group of 5-phosphorylribose-1-pyrophosphate (PRPP) to anthranilate to yield N-(5'-phosphoribosyl)-anthranilate (PRA). The protein is Anthranilate phosphoribosyltransferase of Brucella ovis (strain ATCC 25840 / 63/290 / NCTC 10512).